A 165-amino-acid chain; its full sequence is Protein SprT (165 aa).

The SprT-like domain occupies 20–163; sequence EKLAQANLKL…RCVHCGEQLV (144 aa). Histidine 78 is a Zn(2+) binding site. Glutamate 79 is a catalytic residue. Histidine 82 provides a ligand contact to Zn(2+).

The protein belongs to the SprT family. The cofactor is Zn(2+).

It localises to the cytoplasm. This is Protein SprT from Shigella boydii serotype 18 (strain CDC 3083-94 / BS512).